The following is a 127-amino-acid chain: Thioredoxin (127 aa).

One can recognise a Thioredoxin domain in the interval 2 to 115; it reads SDGVKHINSA…LRAAAEKMGR (114 aa). Active-site nucleophile residues include cysteine 33 and cysteine 36. Cysteine 33 and cysteine 36 are joined by a disulfide.

Belongs to the thioredoxin family.

In terms of biological role, participates in various redox reactions through the reversible oxidation of its active center dithiol to a disulfide and catalyzes dithiol-disulfide exchange reactions. This Neurospora crassa (strain ATCC 24698 / 74-OR23-1A / CBS 708.71 / DSM 1257 / FGSC 987) protein is Thioredoxin (trx).